A 1181-amino-acid polypeptide reads, in one-letter code: HEAT repeat-containing protein 6 (1181 aa).

The stretch at 159-198 (LELLGETGLLMKLSDLAQSDPEVRRAAVHCMANLCLSVPG) is one HEAT 1 repeat. Disordered regions lie at residues 294–347 (DGRT…PVTG) and 371–407 (LDGS…AEGG). The span at 300–312 (KPQQSESSASRPT) shows a compositional bias: polar residues. Residues 313–325 (LNKKKKSKVKPKK) are compositionally biased toward basic residues. A phosphoserine mark is found at Ser336, Ser337, Ser399, and Ser402. Residues 383 to 399 (SSPFSSSSWKRVSSSES) are compositionally biased toward low complexity. HEAT repeat units follow at residues 452 to 490 (ELGS…GSKQ), 514 to 552 (SSIR…DAPY), and 558 to 595 (SLLT…THAP). A disordered region spans residues 613 to 648 (NSNSATPHLSPPDWWKKAPAGPSLEETSVSSPKGSS). Thr618 is modified (phosphothreonine). A compositionally biased stretch (polar residues) spans 637 to 646 (EETSVSSPKG). Ser643 carries the post-translational modification Phosphoserine.

This is HEAT repeat-containing protein 6 (HEATR6) from Pongo abelii (Sumatran orangutan).